Reading from the N-terminus, the 300-residue chain is L-threonine kinase (300 aa).

An ATP-binding site is contributed by 92–102 (PVAKGMASSTA).

This sequence belongs to the GHMP kinase family. PduX subfamily.

The protein localises to the cytoplasm. It catalyses the reaction L-threonine + ATP = O-phospho-L-threonine + ADP + H(+). It functions in the pathway cofactor biosynthesis; adenosylcobalamin biosynthesis. It participates in polyol metabolism; 1,2-propanediol degradation. In terms of biological role, L-threonine kinase that catalyzes the conversion of L-threonine to L-threonine-O-3-phosphate. Involved in the de novo synthesis of adenosylcobalamin (coenzyme B12) and the assimilation of cobyric acid. Uses ATP; the activity with CTP, GTP or UTP is 6, 11, and 3% of the activity with ATP, respectively. Functionally, the 1,2-propanediol (1,2-PD)-specific bacterial microcompartment (BMC) concentrates low levels of 1,2-PD catabolic enzymes, concentrates volatile reaction intermediates thus enhancing pathway flux and keeps the level of toxic, mutagenic propionaldehyde low. This gene probably benefits from its induction via the Pdu promoter, rather than a physical interaction with the BMC. In Salmonella typhimurium (strain LT2 / SGSC1412 / ATCC 700720), this protein is L-threonine kinase.